The chain runs to 397 residues: Elongation factor Tu (397 aa).

The region spanning 10–206 (KPHVNIGTIG…AVDDNVPEPE (197 aa)) is the tr-type G domain. Positions 19–26 (GHVDHGKT) are G1. 19–26 (GHVDHGKT) contacts GTP. T26 serves as a coordination point for Mg(2+). The interval 62-66 (GITIN) is G2. Positions 83-86 (DAPG) are G3. GTP contacts are provided by residues 83 to 87 (DAPGH) and 138 to 141 (NKSD). The interval 138–141 (NKSD) is G4. Positions 176-178 (SAL) are G5.

The protein belongs to the TRAFAC class translation factor GTPase superfamily. Classic translation factor GTPase family. EF-Tu/EF-1A subfamily. In terms of assembly, monomer.

Its subcellular location is the cytoplasm. The catalysed reaction is GTP + H2O = GDP + phosphate + H(+). Its function is as follows. GTP hydrolase that promotes the GTP-dependent binding of aminoacyl-tRNA to the A-site of ribosomes during protein biosynthesis. The chain is Elongation factor Tu from Brevibacterium linens.